Consider the following 187-residue polypeptide: Elongation factor P (187 aa).

Belongs to the elongation factor P family.

It localises to the cytoplasm. It functions in the pathway protein biosynthesis; polypeptide chain elongation. Involved in peptide bond synthesis. Stimulates efficient translation and peptide-bond synthesis on native or reconstituted 70S ribosomes in vitro. Probably functions indirectly by altering the affinity of the ribosome for aminoacyl-tRNA, thus increasing their reactivity as acceptors for peptidyl transferase. The protein is Elongation factor P of Bifidobacterium animalis subsp. lactis (strain AD011).